Reading from the N-terminus, the 557-residue chain is Membrane protein insertase YidC (557 aa).

5 helical membrane-spanning segments follow: residues 6-26 (TILW…WQVH), 219-239 (IGPF…IYTD), 367-387 (IVGN…LAFF), 437-457 (LGGC…YWVL), and 514-534 (MPIV…LYWV).

This sequence belongs to the OXA1/ALB3/YidC family. Type 1 subfamily. In terms of assembly, interacts with the Sec translocase complex via SecD. Specifically interacts with transmembrane segments of nascent integral membrane proteins during membrane integration.

The protein localises to the cell inner membrane. Functionally, required for the insertion and/or proper folding and/or complex formation of integral membrane proteins into the membrane. Involved in integration of membrane proteins that insert both dependently and independently of the Sec translocase complex, as well as at least some lipoproteins. Aids folding of multispanning membrane proteins. The protein is Membrane protein insertase YidC of Polynucleobacter asymbioticus (strain DSM 18221 / CIP 109841 / QLW-P1DMWA-1) (Polynucleobacter necessarius subsp. asymbioticus).